A 784-amino-acid polypeptide reads, in one-letter code: Probable phosphoketolase (784 aa).

Belongs to the XFP family. Thiamine diphosphate serves as cofactor.

The protein is Probable phosphoketolase of Rhodopseudomonas palustris (strain HaA2).